An 832-amino-acid chain; its full sequence is Subtilisin-like protease SBT2.4 (832 aa).

The first 27 residues, 1 to 27, serve as a signal peptide directing secretion; that stretch reads METNPRKLRSYSYICLIVCIFVLVVCA. The Inhibitor I9 domain maps to 74–138; it reads EAKKIEEIHD…VEEDKGVKLM (65 aa). Residues 150–690 enclose the Peptidase S8 domain; sequence QQVWQKISNE…AGHVNPARAL (541 aa). The active-site Charge relay system is aspartate 174. Asparagine 196 and asparagine 238 each carry an N-linked (GlcNAc...) asparagine glycan. Histidine 252 acts as the Charge relay system in catalysis. The PA domain occupies 425–524; the sequence is TNGSVLQPLT…SAAQIILRYY (100 aa). Asparagine 426 carries N-linked (GlcNAc...) asparagine glycosylation. Serine 618 serves as the catalytic Charge relay system. 3 N-linked (GlcNAc...) asparagine glycosylation sites follow: asparagine 761, asparagine 774, and asparagine 800.

This sequence belongs to the peptidase S8 family.

The protein localises to the secreted. Serine protease required for epidermal surface formation in embryos and juvenile plants. Involved in embryonic cuticle formation downstream of BHLH95/ZOU. In Arabidopsis thaliana (Mouse-ear cress), this protein is Subtilisin-like protease SBT2.4.